Here is a 501-residue protein sequence, read N- to C-terminus: Myrosinase MA1 (501 aa).

3 disulfide bridges follow: Cys-6–Cys-438, Cys-14–Cys-434, and Cys-206–Cys-214. N-linked (GlcNAc...) asparagine glycosylation is present at Asn-21. Residue Gln-39 coordinates substrate. A Zn(2+)-binding site is contributed by His-56. An N-linked (GlcNAc...) asparagine glycan is attached at Asn-60. Asp-70 serves as a coordination point for Zn(2+). Asn-90 is a glycosylation site (N-linked (GlcNAc...) asparagine). 2 residues coordinate substrate: His-141 and Asn-186. Gln-187 is a binding site for L-ascorbate. Asn-218 and Asn-244 each carry an N-linked (GlcNAc...) asparagine glycan. Arg-259 lines the L-ascorbate pocket. N-linked (GlcNAc...) asparagine glycosylation is found at Asn-265 and Asn-292. Residue Tyr-330 coordinates substrate. N-linked (GlcNAc...) asparagine glycosylation is found at Asn-343, Asn-346, and Asn-361. Glu-409 acts as the Nucleophile in catalysis. Residues Trp-457 and 464–465 each bind substrate; that span reads EF. N-linked (GlcNAc...) asparagine glycosylation is present at Asn-482.

It belongs to the glycosyl hydrolase 1 family. Homodimer. In terms of tissue distribution, in vacuoles called myrosin grains of a certain class of cells, myrosin cells, distributed in the cotyledons and the axis of the embryo as well as in different organs of the growing plant.

It is found in the vacuole. The catalysed reaction is a thioglucoside + H2O = a sugar + a thiol.. Its function is as follows. Degradation of glucosinolates (glucose residue linked by a thioglucoside bound to an amino acid derivative) to glucose, sulfate and any of the products: thiocyanates, isothiocyanates, nitriles, epithionitriles or oxazolidine-2-thiones. The sequence is that of Myrosinase MA1 from Sinapis alba (White mustard).